A 429-amino-acid polypeptide reads, in one-letter code: Phosphoribosylamine--glycine ligase (429 aa).

An ATP-grasp domain is found at 109-316 (KDFLARHQIP…LVELCLAAID (208 aa)). 135–196 (VREQGAPIVV…EEFLDGEEAS (62 aa)) is an ATP binding site. The tract at residues 212–234 (SQDHKRVGDKDTGPNTGGMGAYS) is disordered. Over residues 213 to 223 (QDHKRVGDKDT) the composition is skewed to basic and acidic residues. Mg(2+)-binding residues include Glu-286 and Asn-288.

Belongs to the GARS family. The cofactor is Mg(2+). Mn(2+) is required as a cofactor.

It catalyses the reaction 5-phospho-beta-D-ribosylamine + glycine + ATP = N(1)-(5-phospho-beta-D-ribosyl)glycinamide + ADP + phosphate + H(+). It participates in purine metabolism; IMP biosynthesis via de novo pathway; N(1)-(5-phospho-D-ribosyl)glycinamide from 5-phospho-alpha-D-ribose 1-diphosphate: step 2/2. The polypeptide is Phosphoribosylamine--glycine ligase (Vibrio vulnificus (strain YJ016)).